We begin with the raw amino-acid sequence, 386 residues long: Succinate--CoA ligase [ADP-forming] subunit beta (386 aa).

The 236-residue stretch at 9 to 244 (KEILRKYGVP…HDEEDPLETR (236 aa)) folds into the ATP-grasp domain. ATP is bound by residues Lys46, 53 to 55 (GRG), Glu99, Cys102, and Glu107. Positions 199 and 213 each coordinate Mg(2+). Substrate contacts are provided by residues Asn264 and 321 to 323 (GIM).

Belongs to the succinate/malate CoA ligase beta subunit family. Heterotetramer of two alpha and two beta subunits. The cofactor is Mg(2+).

The enzyme catalyses succinate + ATP + CoA = succinyl-CoA + ADP + phosphate. It catalyses the reaction GTP + succinate + CoA = succinyl-CoA + GDP + phosphate. It functions in the pathway carbohydrate metabolism; tricarboxylic acid cycle; succinate from succinyl-CoA (ligase route): step 1/1. In terms of biological role, succinyl-CoA synthetase functions in the citric acid cycle (TCA), coupling the hydrolysis of succinyl-CoA to the synthesis of either ATP or GTP and thus represents the only step of substrate-level phosphorylation in the TCA. The beta subunit provides nucleotide specificity of the enzyme and binds the substrate succinate, while the binding sites for coenzyme A and phosphate are found in the alpha subunit. This chain is Succinate--CoA ligase [ADP-forming] subunit beta, found in Rickettsia prowazekii (strain Madrid E).